Consider the following 146-residue polypeptide: Hemoglobin cathodic subunit beta (146 aa).

The 145-residue stretch at 2-146 (QWSSSERSTI…VVSALSRQYF (145 aa)) folds into the Globin domain. Residues histidine 63 and histidine 92 each coordinate heme b.

The protein belongs to the globin family. As to quaternary structure, heterotetramer of two alpha chains and two beta chains. In terms of tissue distribution, red blood cells.

Its function is as follows. Involved in oxygen transport from the gills to the various peripheral tissues. The sequence is that of Hemoglobin cathodic subunit beta from Conger conger (Conger eel).